The chain runs to 149 residues: Large ribosomal subunit protein uL13 (149 aa).

Belongs to the universal ribosomal protein uL13 family. Part of the 50S ribosomal subunit.

This protein is one of the early assembly proteins of the 50S ribosomal subunit, although it is not seen to bind rRNA by itself. It is important during the early stages of 50S assembly. The sequence is that of Large ribosomal subunit protein uL13 from Saccharolobus solfataricus (strain ATCC 35092 / DSM 1617 / JCM 11322 / P2) (Sulfolobus solfataricus).